The sequence spans 355 residues: uncharacterized protein (355 aa).

The interval 1-104 (MGTKGLPLYP…EQAKTVQGGR (104 aa)) is disordered. Position 19 is an N6-acetyllysine (K19). Residues 45–54 (EEGTDLEGDM) are compositionally biased toward acidic residues. S175 is subject to Phosphoserine. 2 disordered regions span residues 247-310 (PRGS…AAYK) and 325-355 (SITS…GKKP). At Y293 the chain carries Phosphotyrosine. The residue at position 294 (S294) is a Phosphoserine. The span at 325 to 334 (SITSLSSRTT) shows a compositional bias: polar residues. Residues 336–348 (LPAADPFALAPFP) show a composition bias toward low complexity.

This is an uncharacterized protein from Homo sapiens (Human).